The chain runs to 576 residues: MKASKYILPTEKENPADAVVASHRLMIRAGLVRKSSAGLYFYLPLGLKVLKKIEQIVREEMNSTGALEFDLPILTPSDFWEQSGRWSAMGKEMFRIQDRHDLSYALGPTHEESFSFLLKPLLKSYKDLPVNVYQIQTKFRDEIRPRFGVIRSREFIMKDAYSFHIDDSSLDDTYQAMRVAYRKIFDRCGLKTIPVQADSGSMGGSASEEFMVVSPIGEETLLLCNSCGYSSNSEKTPLILKKENGSAKFSEKKEISTPGKKTISEVSTLLGVSESETIKAVALKSEKKKILVFLRGDLELNLHKLHSLLKIADSEPMTDLEIRELGLIPGFISPIAPNDKIKVLYDRSLQKDFPYVVGSSKEDFHTQGFILEKEISGLPEFADVALAREGDLCPNCSSPLKAEKGIEVGHIFKLGDKYTKAFGIQVLDQNGKSKTLTTGCYGIGVNRTMATVIEQCNDEKGIFWPISIAPFEVSLVSIVKGEDQYSKIEEFYNVLINEGIEVFWDDRDLGPGFKLKDSELIGFPIRITIGKKFFESGEISIYNRKKDQEDSFVFSGFDDLVARVESMRQELFTELR.

Belongs to the class-II aminoacyl-tRNA synthetase family. ProS type 1 subfamily. As to quaternary structure, homodimer.

It is found in the cytoplasm. The catalysed reaction is tRNA(Pro) + L-proline + ATP = L-prolyl-tRNA(Pro) + AMP + diphosphate. Functionally, catalyzes the attachment of proline to tRNA(Pro) in a two-step reaction: proline is first activated by ATP to form Pro-AMP and then transferred to the acceptor end of tRNA(Pro). As ProRS can inadvertently accommodate and process non-cognate amino acids such as alanine and cysteine, to avoid such errors it has two additional distinct editing activities against alanine. One activity is designated as 'pretransfer' editing and involves the tRNA(Pro)-independent hydrolysis of activated Ala-AMP. The other activity is designated 'posttransfer' editing and involves deacylation of mischarged Ala-tRNA(Pro). The misacylated Cys-tRNA(Pro) is not edited by ProRS. The chain is Proline--tRNA ligase from Leptospira interrogans serogroup Icterohaemorrhagiae serovar copenhageni (strain Fiocruz L1-130).